The following is a 238-amino-acid chain: MQEASSAAAAGAEPGRRAAQHQFAGVDLRRPKGYAAPAPAPAVGEGDPCPRCASRDTKFCYYNNYNTSQPRHFCKGCRRYWTKGGTLRNVPVGGGTRKKPSSSSSSSSYVAAADADRQPKKKPASKKRRVVAPAPELATAADPGKTATTTTTTSEITTETGALEDSDSLAHLLLQPGTEDAEAVALGLGLSDFPSAGKAVLDDEDSFVWPAASFDMGACWAGAGFADPDPACIFLNLP.

A compositionally biased stretch (low complexity) spans 1-13; sequence MQEASSAAAAGAE. Residues 1–48 form a disordered region; it reads MQEASSAAAAGAEPGRRAAQHQFAGVDLRRPKGYAAPAPAPAVGEGDP. A Dof-type zinc finger spans residues 47–101; it reads DPCPRCASRDTKFCYYNNYNTSQPRHFCKGCRRYWTKGGTLRNVPVGGGTRKKPS. 4 residues coordinate Zn(2+): cysteine 49, cysteine 52, cysteine 74, and cysteine 77. Positions 85-155 are disordered; sequence GTLRNVPVGG…TATTTTTTSE (71 aa). Basic residues predominate over residues 119 to 130; that stretch reads PKKKPASKKRRV. The span at 138–155 shows a compositional bias: low complexity; the sequence is ATAADPGKTATTTTTTSE.

Expressed in all tissues examined.

Its subcellular location is the nucleus. Functionally, transcription factor that binds specifically to a 5'-AA[AG]G-3' consensus core sequence at the MNF1-binding site. This Zea mays (Maize) protein is Dof zinc finger protein MNB1A (MNB1A).